A 2178-amino-acid chain; its full sequence is Streptococcal hemagglutinin (2178 aa).

The first 90 residues, M1 to A90, serve as a signal peptide directing secretion. Residues E91–L137 form a non-repeat region 1 (NR1) region. Positions S138–S219 are ser-rich region 1 (SR1). Positions T192 to N244 are enriched in low complexity. Disordered stretches follow at residues T192 to T246, V495 to A557, S584 to A653, S836 to A857, S884 to A917, S944 to A993, S1020 to A1289, A1341 to S1390, S1488 to A1685, A1725 to T1901, and L2119 to E2151. Residues L220–I449 form a non-repeat region 2 (NR2) region. Residues S450–Q2143 are ser-rich region 2 (SR2). A compositionally biased stretch (low complexity) spans L2119–S2130. Positions L2144–G2148 match the LPXTG sorting signal motif. T2147 is modified (pentaglycyl murein peptidoglycan amidated threonine). Positions G2148–D2178 are cleaved as a propeptide — removed by sortase.

It belongs to the serine-rich repeat protein (SRRP) family. Post-translationally, the protein is glycosylated in vivo; constructs without SR1 and SR2 are not glycosylated.

The protein resides in the secreted. It is found in the cell wall. In terms of biological role, a cell wall protein involved with PadA in host cell interactions required for colonization and pathogensis. Mediates hemagglutination and adherence to ghst glycoproteins. Recognizes fetuin-A (AHSG), a highly glycosylated human plasma protein, also involved in recognition of human platelets, probably via platelet glycoprotein Ib alpha (GP1BA). Acts in concert with PadA to promote binding to glycosylated human fibronectin (FN1) and vitronectin (VTN), and biofilm formation. Plays a major role in fibronectin and vitronectin binding; binding is mediated by glycosylated regions. Probably mediates interaction of PadA with resting platelets. This Streptococcus gordonii (strain Challis / ATCC 35105 / BCRC 15272 / CH1 / DL1 / V288) protein is Streptococcal hemagglutinin.